A 61-amino-acid chain; its full sequence is Large ribosomal subunit protein bL32 (61 aa).

Positions 1-22 are disordered; sequence MAVPKQKSSKSRGRKRRTHQKV. A compositionally biased stretch (basic residues) spans 7-20; that stretch reads KSSKSRGRKRRTHQ.

Belongs to the bacterial ribosomal protein bL32 family.

The polypeptide is Large ribosomal subunit protein bL32 (Desulforapulum autotrophicum (strain ATCC 43914 / DSM 3382 / VKM B-1955 / HRM2) (Desulfobacterium autotrophicum)).